We begin with the raw amino-acid sequence, 412 residues long: Candidapepsin-2 (412 aa).

The segment at residues 1-25 (MTTIAIFTKNVLLAIAFALFAQGAA) is a signal peptide (or 18, or 21). A propeptide spans 26 to 61 (IPDPAKRDDNPGFVALDFEVTRKPLDVNATSELSKR) (activation peptide). An N-linked (GlcNAc...) asparagine glycan is attached at asparagine 53. Residues 75–383 (YGIRVSVGSN…LDKETVLSRS (309 aa)) enclose the Peptidase A1 domain. The active site involves aspartate 93. The cysteines at positions 108 and 113 are disulfide-linked. The active site involves aspartate 273. Cysteine 311 and cysteine 345 are oxidised to a cystine.

This sequence belongs to the peptidase A1 family. Post-translationally, O-glycosylated.

It localises to the secreted. The enzyme catalyses Preferential cleavage at the carboxyl of hydrophobic amino acids, but fails to cleave 15-Leu-|-Tyr-16, 16-Tyr-|-Leu-17 and 24-Phe-|-Phe-25 of insulin B chain. Activates trypsinogen, and degrades keratin.. The chain is Candidapepsin-2 (SAPP2) from Candida parapsilosis (Yeast).